The chain runs to 234 residues: 1-(5-phosphoribosyl)-5-[(5-phosphoribosylamino)methylideneamino] imidazole-4-carboxamide isomerase (234 aa).

Asp-9 functions as the Proton acceptor in the catalytic mechanism. Residue Asp-131 is the Proton donor of the active site.

Belongs to the HisA/HisF family.

It localises to the cytoplasm. It carries out the reaction 1-(5-phospho-beta-D-ribosyl)-5-[(5-phospho-beta-D-ribosylamino)methylideneamino]imidazole-4-carboxamide = 5-[(5-phospho-1-deoxy-D-ribulos-1-ylimino)methylamino]-1-(5-phospho-beta-D-ribosyl)imidazole-4-carboxamide. It participates in amino-acid biosynthesis; L-histidine biosynthesis; L-histidine from 5-phospho-alpha-D-ribose 1-diphosphate: step 4/9. In Staphylococcus saprophyticus subsp. saprophyticus (strain ATCC 15305 / DSM 20229 / NCIMB 8711 / NCTC 7292 / S-41), this protein is 1-(5-phosphoribosyl)-5-[(5-phosphoribosylamino)methylideneamino] imidazole-4-carboxamide isomerase.